We begin with the raw amino-acid sequence, 231 residues long: Isoprenyl transferase (231 aa).

Residue Asp-14 is part of the active site. Asp-14 provides a ligand contact to Mg(2+). Residues 15–18 (GNGR), Trp-19, Arg-27, His-31, and 59–61 (STE) contribute to the substrate site. The active-site Proton acceptor is the Asn-62. Residues Trp-63, Arg-65, Arg-176, and 182 to 184 (RIS) contribute to the substrate site. Position 195 (Glu-195) interacts with Mg(2+).

Belongs to the UPP synthase family. As to quaternary structure, homodimer. It depends on Mg(2+) as a cofactor.

In terms of biological role, catalyzes the condensation of isopentenyl diphosphate (IPP) with allylic pyrophosphates generating different type of terpenoids. This chain is Isoprenyl transferase, found in Aquifex aeolicus (strain VF5).